Here is a 258-residue protein sequence, read N- to C-terminus: Peroxisomal membrane protein 11B (258 aa).

Lysine 43 carries the post-translational modification N6-acetyllysine. Positions 210–258 (VVRNACDLFIPLDKLGLWRCGPGIVGLCGLVSSILSILTLICPWLRLKP) are interaction with PEX19, PEX11G and FIS1 and peroxisome targeting. Residues 232 to 254 (GIVGLCGLVSSILSILTLICPWL) traverse the membrane as a helical segment.

It belongs to the peroxin-11 family. In terms of assembly, homodimer. Heterodimer with PEX11G. Interacts with PEX19. Interacts with FIS1.

The protein resides in the peroxisome membrane. Involved in peroxisomal proliferation. May regulate peroxisome division by recruiting the dynamin-related GTPase DNM1L to the peroxisomal membrane. Promotes membrane protrusion and elongation on the peroxisomal surface. The sequence is that of Peroxisomal membrane protein 11B (PEX11B) from Bos taurus (Bovine).